Here is a 74-residue protein sequence, read N- to C-terminus: MHNLHCLAMLIPLNISRHPFSATRLFINWSKCQLSQRMILLILIFATFQRQRDLIIPRFLLLIYSVIQCLFLHS.

A helical membrane pass occupies residues 54–72; sequence LIIPRFLLLIYSVIQCLFL.

It is found in the membrane. This is an uncharacterized protein from Saccharomyces cerevisiae (strain ATCC 204508 / S288c) (Baker's yeast).